The chain runs to 344 residues: Fructose-1,6-bisphosphatase class 1 (344 aa).

Mg(2+)-binding residues include E92, D115, L117, and D118. Substrate-binding positions include 118–121, N211, Y244, and K274; that span reads DGSS. E280 contributes to the Mg(2+) binding site.

The protein belongs to the FBPase class 1 family. Homotetramer. It depends on Mg(2+) as a cofactor.

The protein localises to the cytoplasm. It catalyses the reaction beta-D-fructose 1,6-bisphosphate + H2O = beta-D-fructose 6-phosphate + phosphate. It participates in carbohydrate biosynthesis; gluconeogenesis. The protein is Fructose-1,6-bisphosphatase class 1 of Aeromonas salmonicida (strain A449).